The following is a 308-amino-acid chain: MLPPYFLFKEMTDTQYIGRFAPSPSGELHFGSLIAALGSYLQARARHGRWLVRIEDIDPPREVPGAAETILRQLEHYGLHWDGDVLWQSQRHHAYREALAWLHEQGLSYYCTCTRARIQSIGGIYDGHCRVLHHGPDNAAVRIRQQHPVTQFTDQLRGIIHADEKLAREDFIIHRRDGLFAYNLAVVVDDHFQGVSEIVRGADLIEPTVRQISLYQLFGWKVPDYIHLPLALNPQGAKLSKQNHAPALPKGDPRPVLIAALQFLGQQAEAHWQDFSVEQILQSAVKNWRLTAVPESAIVNSTFSNASC.

Residues 19–23 (RFAPS) and Glu-55 contribute to the L-glutamate site. Residues 22–32 (PSPSGELHFGS) carry the 'HIGH' region motif. Positions 111, 113, 125, and 129 each coordinate Zn(2+). Residues Tyr-182 and Arg-200 each contribute to the L-glutamate site. Residues 238-242 (KLSKQ) carry the 'KMSKS' region motif. Lys-241 serves as a coordination point for ATP.

It belongs to the class-I aminoacyl-tRNA synthetase family. GluQ subfamily. Requires Zn(2+) as cofactor.

Functionally, catalyzes the tRNA-independent activation of glutamate in presence of ATP and the subsequent transfer of glutamate onto a tRNA(Asp). Glutamate is transferred on the 2-amino-5-(4,5-dihydroxy-2-cyclopenten-1-yl) moiety of the queuosine in the wobble position of the QUC anticodon. This Escherichia coli O157:H7 protein is Glutamyl-Q tRNA(Asp) synthetase.